Consider the following 292-residue polypeptide: tRNA(Ile)-lysidine synthase (292 aa).

32 to 37 (SGGADS) is a binding site for ATP.

It belongs to the tRNA(Ile)-lysidine synthase family.

Its subcellular location is the cytoplasm. The enzyme catalyses cytidine(34) in tRNA(Ile2) + L-lysine + ATP = lysidine(34) in tRNA(Ile2) + AMP + diphosphate + H(+). Its function is as follows. Ligates lysine onto the cytidine present at position 34 of the AUA codon-specific tRNA(Ile) that contains the anticodon CAU, in an ATP-dependent manner. Cytidine is converted to lysidine, thus changing the amino acid specificity of the tRNA from methionine to isoleucine. This is tRNA(Ile)-lysidine synthase from Corynebacterium diphtheriae (strain ATCC 700971 / NCTC 13129 / Biotype gravis).